Here is a 62-residue protein sequence, read N- to C-terminus: uncharacterized protein (62 aa).

The span at 1 to 18 (MTTNRVDPLEQTSPNTPT) shows a compositional bias: polar residues. The disordered stretch occupies residues 1–24 (MTTNRVDPLEQTSPNTPTSKREKA).

This is an uncharacterized protein from Rickettsia conorii (strain ATCC VR-613 / Malish 7).